The chain runs to 1517 residues: DNA-directed RNA polymerase subunit beta' (1517 aa).

4 residues coordinate Zn(2+): Cys71, Cys73, Cys86, and Cys89. The Mg(2+) site is built by Asp482, Asp484, and Asp486. The Zn(2+) site is built by Cys812, Cys886, Cys893, and Cys896.

It belongs to the RNA polymerase beta' chain family. In terms of assembly, the RNAP catalytic core consists of 2 alpha, 1 beta, 1 beta' and 1 omega subunit. When a sigma factor is associated with the core the holoenzyme is formed, which can initiate transcription. Mg(2+) is required as a cofactor. The cofactor is Zn(2+).

It catalyses the reaction RNA(n) + a ribonucleoside 5'-triphosphate = RNA(n+1) + diphosphate. Its function is as follows. DNA-dependent RNA polymerase catalyzes the transcription of DNA into RNA using the four ribonucleoside triphosphates as substrates. The protein is DNA-directed RNA polymerase subunit beta' of Campylobacter jejuni subsp. jejuni serotype O:23/36 (strain 81-176).